The chain runs to 148 residues: D-aminoacyl-tRNA deacylase (148 aa).

Positions 137-138 (GP) match the Gly-cisPro motif, important for rejection of L-amino acids motif.

It belongs to the DTD family. Homodimer.

Its subcellular location is the cytoplasm. The enzyme catalyses glycyl-tRNA(Ala) + H2O = tRNA(Ala) + glycine + H(+). It catalyses the reaction a D-aminoacyl-tRNA + H2O = a tRNA + a D-alpha-amino acid + H(+). Its function is as follows. An aminoacyl-tRNA editing enzyme that deacylates mischarged D-aminoacyl-tRNAs. Also deacylates mischarged glycyl-tRNA(Ala), protecting cells against glycine mischarging by AlaRS. Acts via tRNA-based rather than protein-based catalysis; rejects L-amino acids rather than detecting D-amino acids in the active site. By recycling D-aminoacyl-tRNA to D-amino acids and free tRNA molecules, this enzyme counteracts the toxicity associated with the formation of D-aminoacyl-tRNA entities in vivo and helps enforce protein L-homochirality. The polypeptide is D-aminoacyl-tRNA deacylase (Aquifex aeolicus (strain VF5)).